Reading from the N-terminus, the 1299-residue chain is DNA-directed RNA polymerase subunit beta' (1299 aa).

Zn(2+) contacts are provided by Cys60, Cys62, Cys75, and Cys78. Mg(2+)-binding residues include Asp535, Asp537, and Asp539. Residues Cys877, Cys954, Cys961, and Cys964 each contribute to the Zn(2+) site.

Belongs to the RNA polymerase beta' chain family. As to quaternary structure, the RNAP catalytic core consists of 2 alpha, 1 beta, 1 beta' and 1 omega subunit. When a sigma factor is associated with the core the holoenzyme is formed, which can initiate transcription. Mg(2+) is required as a cofactor. Requires Zn(2+) as cofactor.

The catalysed reaction is RNA(n) + a ribonucleoside 5'-triphosphate = RNA(n+1) + diphosphate. Functionally, DNA-dependent RNA polymerase catalyzes the transcription of DNA into RNA using the four ribonucleoside triphosphates as substrates. The protein is DNA-directed RNA polymerase subunit beta' of Renibacterium salmoninarum (strain ATCC 33209 / DSM 20767 / JCM 11484 / NBRC 15589 / NCIMB 2235).